We begin with the raw amino-acid sequence, 55 residues long: ATP synthase protein 8 (55 aa).

A helical membrane pass occupies residues 7 to 24; the sequence is NPWLFIMLMSWLTFSLII. Residues 35–55 are disordered; the sequence is NPPSNKTPTTTKTSPWTWPWT. The segment covering 37-55 has biased composition (low complexity); sequence PSNKTPTTTKTSPWTWPWT.

It belongs to the ATPase protein 8 family. In terms of assembly, F-type ATPases have 2 components, CF(1) - the catalytic core - and CF(0) - the membrane proton channel.

The protein resides in the mitochondrion membrane. Mitochondrial membrane ATP synthase (F(1)F(0) ATP synthase or Complex V) produces ATP from ADP in the presence of a proton gradient across the membrane which is generated by electron transport complexes of the respiratory chain. F-type ATPases consist of two structural domains, F(1) - containing the extramembraneous catalytic core and F(0) - containing the membrane proton channel, linked together by a central stalk and a peripheral stalk. During catalysis, ATP synthesis in the catalytic domain of F(1) is coupled via a rotary mechanism of the central stalk subunits to proton translocation. Part of the complex F(0) domain. Minor subunit located with subunit a in the membrane. The protein is ATP synthase protein 8 (MT-ATP8) of Corythaeola cristata (Great blue turaco).